The sequence spans 442 residues: Yes-associated protein homolog 1 (442 aa).

Residues Met-1 to His-10 show a composition bias toward basic residues. The interval Met-1–Ala-84 is disordered. Composition is skewed to polar residues over residues Asn-13–Ser-22 and Leu-55–His-71. Ser-104 bears the Phosphoserine mark. Positions Leu-108–Thr-120 are enriched in polar residues. Positions Leu-108–Ser-136 are disordered. The span at Pro-124–Ser-134 shows a compositional bias: basic residues. The WW domain maps to Leu-203–Leu-236.

Belongs to the YAP1 family. Highly divergent. Interacts (via WW domain) with wts-1 (via N-terminus). Interacts (via WW domain) with egl-44; the interaction may regulate transcription. As to expression, expressed in epithelia, hypodermis, muscles, pharynx, intestine, gonadal sheath cells, vulva, spermatheca and in excretory tissue.

It is found in the cytoplasm. It localises to the nucleus. The protein localises to the cell projection. The protein resides in the cilium. Its subcellular location is the cytoskeleton. It is found in the cilium axoneme. Plays a role in thermal stress response and in aging. The protein is Yes-associated protein homolog 1 of Caenorhabditis elegans.